The following is a 691-amino-acid chain: Replication and transcription activator (691 aa).

2 O-linked (GlcNAc) threonine; by host glycosylation sites follow: Thr366 and Thr367. 2 disordered regions span residues Glu482–Pro582 and Leu626–Gly677. Residues Thr504–Thr513 show a composition bias toward low complexity. Residues Pro515–Ala531 show a composition bias toward basic residues. Residues Thr539 to Pro556 are compositionally biased toward low complexity. A compositionally biased stretch (polar residues) spans Glu655–Gly677.

This sequence belongs to the herpesviridae TAF50 family. Homotetramer. Interacts with KTA/ORF57. Interacts with host PARP1; this interaction negatively regulates RTA/ORF50 transactivation activity. Interacts with host SMC5 and SMC6; these interactions remove the repressive chromatin structure to allow viral reactivation. Interacts with host POU2F1; this interaction enhances RTA/ORF50-mediated transactivation of several viral promoters including K-bZIP promoter.

It is found in the host nucleus. The enzyme catalyses S-ubiquitinyl-[E2 ubiquitin-conjugating enzyme]-L-cysteine + [acceptor protein]-L-lysine = [E2 ubiquitin-conjugating enzyme]-L-cysteine + N(6)-ubiquitinyl-[acceptor protein]-L-lysine.. In terms of biological role, transcriptional transactivator that is necessary and sufficient for reactivation of the virus from latency. Acts post-transcriptionally and transcriptionally to regulate viral lytic gene expression and synergistically with ORF57 activates certain early and late viral promoters including its own promoter. Autostimulation on its promoter is mediated by the formation of a ternary complex between ORF50 and the cellular components HGMB1 and POU2F1. Also possesses a bimodal activity in targeting proteins for degradation through using its own E3 ligase activity or by stabilizing and chaperoning host E3 ligases. These activities help to subvert the host innate and adaptive immune responses while also modulating the host transcriptome and protein landscape to promote virus production. For instance, targets the host SMC5/6 complex for ubiquitination and subsequent degradation through the ubiquitin-proteasome during reactivation while during latency, host SMC5/6 complex binds to the viral episome and condenses viral chromatin, creating a repressive chromatin structure to silence genome transcription. Hijacks the cellular E3 ligase complex RNF20/40 to increase the level of transcriptionally active RNA polymerase II on viral gene promoters thereby facilitating lytic gene expression. Acts as a SUMO-targeting ubiquitin ligase and affects general sumoylation of cellular proteins. Promotes the polyubiquitination and subsequent degradation of host MYD88 and thereby inhibits MYD88-mediated TLR4 signaling. Induces the degradation of vFLIP/ORF71 together with cellular ubiquitin ligase ITCH to prevent vFLIP-induced NF-kappa-B signaling. In Homo sapiens (Human), this protein is Replication and transcription activator (ORF50).